Here is a 254-residue protein sequence, read N- to C-terminus: uncharacterized protein (254 aa).

This is an uncharacterized protein from Acidianus filamentous virus 2 (isolate Italy/Pozzuoli) (AFV-2).